We begin with the raw amino-acid sequence, 96 residues long: Teretoxin Tgu6.1 (96 aa).

A signal peptide spans 1–16 (MRPFLVFVLIVSVSLA). The propeptide occupies 17–52 (FSFEDMPNKGGDSVASITADQARGHKRNPLFPFAQR).

Post-translationally, contains 3 disulfide bonds. As to expression, expressed by the venom duct.

Its subcellular location is the secreted. The recombinant protein causes paralysis to polychaete worms (Nereis virens), the natural prey of terebrid snails. The sequence is that of Teretoxin Tgu6.1 from Terebra guttata (White spotted auger snail).